The sequence spans 596 residues: Arginine--tRNA ligase (596 aa).

The 'HIGH' region signature appears at 128-138; the sequence is ANPTSSLHVGH.

It belongs to the class-I aminoacyl-tRNA synthetase family. Monomer.

It localises to the cytoplasm. It carries out the reaction tRNA(Arg) + L-arginine + ATP = L-arginyl-tRNA(Arg) + AMP + diphosphate. The protein is Arginine--tRNA ligase of Acinetobacter baumannii (strain SDF).